We begin with the raw amino-acid sequence, 393 residues long: Leucine aminopeptidase 1 (393 aa).

A signal peptide spans 1 to 18; sequence MKLSQVSALAACVPAATA. The propeptide occupies 19 to 84; the sequence is RFVELMEADH…GSQGLRIKES (66 aa). Asn176 carries N-linked (GlcNAc...) asparagine glycosylation. Zn(2+) contacts are provided by His184, Asp202, Glu241, and Asp268. An intrachain disulfide couples Cys317 to Cys321. Position 350 (His350) interacts with Zn(2+).

It belongs to the peptidase M28 family. M28E subfamily. As to quaternary structure, monomer. It depends on Zn(2+) as a cofactor.

Its subcellular location is the secreted. In terms of biological role, extracellular aminopeptidase that allows assimilation of proteinaceous substrates. The polypeptide is Leucine aminopeptidase 1 (LAP1) (Metarhizium robertsii (strain ARSEF 23 / ATCC MYA-3075) (Metarhizium anisopliae (strain ARSEF 23))).